Consider the following 540-residue polypeptide: Phosphatidylinositol 4-phosphate 5-kinase type-1 beta (540 aa).

Residues 1–23 form a disordered region; sequence MSSVTENGDVTAGKPNEEKTYKK. Residues 25-395 enclose the PIPK domain; that stretch reads TSSAIKGAIQ…RFLKFMNTRV (371 aa).

It localises to the cytoplasm. The protein localises to the cytosol. It is found in the cell membrane. Its subcellular location is the endomembrane system. It carries out the reaction a 1,2-diacyl-sn-glycero-3-phospho-(1D-myo-inositol 4-phosphate) + ATP = a 1,2-diacyl-sn-glycero-3-phospho-(1D-myo-inositol-4,5-bisphosphate) + ADP + H(+). The catalysed reaction is 1-octadecanoyl-2-(5Z,8Z,11Z,14Z)-eicosatetraenoyl-sn-glycero-3-phospho-1D-myo-inositol 4-phosphate + ATP = 1-octadecanoyl-2-(5Z,8Z,11Z,14Z)-eicosatetraenoyl-sn-glycero-3-phospho-1D-myo-inositol 4,5-bisphosphate + ADP + H(+). It catalyses the reaction 1-octadecanoyl-2-(9Z)-octadecenoyl-sn-glycero-3-phospho-1D-myo-inositol 4-phosphate + ATP = 1-octadecanoyl-2-(9Z)-octadecenoyl-sn-glycero-3-phospho-1D-myo-inositol 4,5-bisphosphate + ADP + H(+). The enzyme catalyses 1-octadecanoyl-2-(9Z)-octadecenoyl-sn-glycero-3-phospho-1D-myo-inositol + ATP = 1-octadecanoyl-2-(9Z)-octadecenoyl-sn-glycero-3-phospho-1D-myo-inositol 5-phosphate + ADP + H(+). It carries out the reaction 1-octadecanoyl-2-(9Z,12Z)-octadecadienoyl-sn-glycero-3-phospho-1D-myo-inositol + ATP = 1-octadecanoyl-2-(9Z,12Z)-octadecadienoyl-sn-glycero-3-phospho-1D-myo-inositol 5-phosphate + ADP + H(+). The catalysed reaction is 1-octadecanoyl-2-(5Z,8Z,11Z,14Z-eicosatetraenoyl)-sn-glycero-3-phospho-(1D-myo-inositol) + ATP = 1-octadecanoyl-2-(5Z,8Z,11Z,14Z)-eicosatetraenoyl-sn-glycero-3-phospho-1D-myo-inositol 5-phosphate + ADP + H(+). It catalyses the reaction 1,2-di-(9Z,12Z)-octadecadienoyl-sn-glycero-3-phospho-1D-myo-inositol + ATP = 1,2-di(9Z,12Z)-octadecadienoyl-sn-glycero-3-phospho-1D-myo-inositol 5-phosphate + ADP + H(+). Catalyzes the phosphorylation of phosphatidylinositol 4-phosphate (PtdIns(4)P/PI4P) to form phosphatidylinositol 4,5-bisphosphate (PtdIns(4,5)P2/PIP2), a lipid second messenger that regulates several cellular processes such as signal transduction, vesicle trafficking, actin cytoskeleton dynamics, cell adhesion, and cell motility. PtdIns(4,5)P2 can directly act as a second messenger or can be utilized as a precursor to generate other second messengers: inositol 1,4,5-trisphosphate (IP3), diacylglycerol (DAG) or phosphatidylinositol-3,4,5-trisphosphate (PtdIns(3,4,5)P3/PIP3). This is Phosphatidylinositol 4-phosphate 5-kinase type-1 beta (PIP5K1B) from Gallus gallus (Chicken).